Here is a 529-residue protein sequence, read N- to C-terminus: Cytochrome P450 monooxygenase acuD (529 aa).

The helical transmembrane segment at 8–28 threads the bilayer; it reads FAVIAASAAAVAGVLFLIYAA. A glycan (N-linked (GlcNAc...) asparagine) is linked at Asn-81. Residue Cys-449 participates in heme binding.

Belongs to the cytochrome P450 family. The cofactor is heme.

It is found in the endoplasmic reticulum membrane. It catalyses the reaction 3-hydroxybenzyl alcohol + reduced [NADPH--hemoprotein reductase] + O2 = gentisyl alcohol + oxidized [NADPH--hemoprotein reductase] + H2O + H(+). It functions in the pathway secondary metabolite biosynthesis. In terms of biological role, cytochrome P450 monooxygenase; part of the gene cluster that mediates the biosynthesis of aculins. The pathway begins with the synthesis of 6-methylsalicylic acid by the polyketide synthase (PKS) acuA via condensation of acetate and malonate units. The 6-methylsalicylic acid decarboxylase acuB then catalyzes the decarboxylation of 6-methylsalicylic acid to yield m-cresol (also known as 3-methylphenol). These first reactions occur in the cytosol. The intermediate m-cresol is then transported into the endoplasmic reticulum where the cytochrome P450 monooxygenase acuC converts it to m-hydroxybenzyl alcohol, which is further converted to gentisyl alcohol by the cytochrome P450 monooxygenase acuD. Gentisyl alcohol is further oxidized by the oxidoreductase acuE that probably catalyzes hydroxylation of the aromatic ring. The aromatic system might then be opened by oxidation through a Baeyer-Villiger type of oxidation, which could be catalyzed by acuF, with the carboxylic acid at C-1 subsequently reduced to an aldehyde by acuG. Subsequently, a hemiacetal is formed, before the dehydrogenase acuH would reduce the double bond between C-4 and C-6. Finally, keto-enol tautomerism results in formation of aculinic acid, which exists as two diastereomers (both R/S configurations at C-1) by non-enzymatic hemiacetal formation. The carboxypeptidase acuI could be involved in the linking of aculinic acid to an aculene A moiety produced by the aculene biosynthesis cluster and which leads to the production of aculin A. AcuI may also be involved in the attachment of proline to aculinic acid to form epi-aculins A and B. This chain is Cytochrome P450 monooxygenase acuD, found in Aspergillus aculeatus (strain ATCC 16872 / CBS 172.66 / WB 5094).